The chain runs to 51 residues: MHGACLSGLYPLPFTHKFHDYLHFNIYISFGGPKYCITALNTYVILFYTVY.

Belongs to the UPF0320 family.

The chain is UPF0320 protein YOL166W-A from Saccharomyces cerevisiae (strain ATCC 204508 / S288c) (Baker's yeast).